Reading from the N-terminus, the 409-residue chain is NADH-quinone oxidoreductase subunit D (409 aa).

It belongs to the complex I 49 kDa subunit family. As to quaternary structure, NDH-1 is composed of 14 different subunits. Subunits NuoB, C, D, E, F, and G constitute the peripheral sector of the complex.

Its subcellular location is the cell inner membrane. The enzyme catalyses a quinone + NADH + 5 H(+)(in) = a quinol + NAD(+) + 4 H(+)(out). In terms of biological role, NDH-1 shuttles electrons from NADH, via FMN and iron-sulfur (Fe-S) centers, to quinones in the respiratory chain. The immediate electron acceptor for the enzyme in this species is believed to be ubiquinone. Couples the redox reaction to proton translocation (for every two electrons transferred, four hydrogen ions are translocated across the cytoplasmic membrane), and thus conserves the redox energy in a proton gradient. The chain is NADH-quinone oxidoreductase subunit D from Helicobacter hepaticus (strain ATCC 51449 / 3B1).